Here is a 124-residue protein sequence, read N- to C-terminus: Small ribosomal subunit protein uS12 (124 aa).

Asp-89 carries the post-translational modification 3-methylthioaspartic acid. A disordered region spans residues 105–124; the sequence is AGVKDRKKGRSKYGAKRPKA. A compositionally biased stretch (basic residues) spans 109 to 124; the sequence is DRKKGRSKYGAKRPKA.

Belongs to the universal ribosomal protein uS12 family. Part of the 30S ribosomal subunit. Contacts proteins S8 and S17. May interact with IF1 in the 30S initiation complex.

With S4 and S5 plays an important role in translational accuracy. In terms of biological role, interacts with and stabilizes bases of the 16S rRNA that are involved in tRNA selection in the A site and with the mRNA backbone. Located at the interface of the 30S and 50S subunits, it traverses the body of the 30S subunit contacting proteins on the other side and probably holding the rRNA structure together. The combined cluster of proteins S8, S12 and S17 appears to hold together the shoulder and platform of the 30S subunit. The chain is Small ribosomal subunit protein uS12 from Dichelobacter nodosus (strain VCS1703A).